The primary structure comprises 888 residues: Bifunctional uridylyltransferase/uridylyl-removing enzyme (888 aa).

Residues 1–348 (MATTTDKQVS…YHFAEDKIEP (348 aa)) form a uridylyltransferase region. The segment at 349-709 (INPRFRIINN…LQPTTSRGAT (361 aa)) is uridylyl-removing. The 123-residue stretch at 468–590 (VDEHTILVIR…VGTQQRLDYL (123 aa)) folds into the HD domain. ACT domains lie at 710 to 787 (ELII…DDTM) and 817 to 888 (ELSI…NIEQ).

It belongs to the GlnD family. Mg(2+) is required as a cofactor.

The enzyme catalyses [protein-PII]-L-tyrosine + UTP = [protein-PII]-uridylyl-L-tyrosine + diphosphate. The catalysed reaction is [protein-PII]-uridylyl-L-tyrosine + H2O = [protein-PII]-L-tyrosine + UMP + H(+). Uridylyltransferase (UTase) activity is inhibited by glutamine, while glutamine activates uridylyl-removing (UR) activity. Functionally, modifies, by uridylylation and deuridylylation, the PII regulatory proteins (GlnB and homologs), in response to the nitrogen status of the cell that GlnD senses through the glutamine level. Under low glutamine levels, catalyzes the conversion of the PII proteins and UTP to PII-UMP and PPi, while under higher glutamine levels, GlnD hydrolyzes PII-UMP to PII and UMP (deuridylylation). Thus, controls uridylylation state and activity of the PII proteins, and plays an important role in the regulation of nitrogen assimilation and metabolism. This chain is Bifunctional uridylyltransferase/uridylyl-removing enzyme, found in Hydrogenovibrio crunogenus (strain DSM 25203 / XCL-2) (Thiomicrospira crunogena).